The following is a 411-amino-acid chain: Glycogen synthase kinase-3 homolog MsK-2 (411 aa).

The Protein kinase domain maps to Y74 to F358. ATP-binding positions include V80–V88 and K103. D199 functions as the Proton acceptor in the catalytic mechanism. Residue Y234 is modified to Phosphotyrosine.

The protein belongs to the protein kinase superfamily. CMGC Ser/Thr protein kinase family. GSK-3 subfamily. In terms of tissue distribution, absent in leaves and petioles while a moderate expression is seen in the stems, roots, and nodes.

The enzyme catalyses L-seryl-[protein] + ATP = O-phospho-L-seryl-[protein] + ADP + H(+). It carries out the reaction L-threonyl-[protein] + ATP = O-phospho-L-threonyl-[protein] + ADP + H(+). The polypeptide is Glycogen synthase kinase-3 homolog MsK-2 (MSK-2) (Medicago sativa (Alfalfa)).